We begin with the raw amino-acid sequence, 188 residues long: M-phase phosphoprotein 6 homolog (188 aa).

The tract at residues 93–188 is disordered; it reads EENVDEKDVS…NKNKKKKKRN (96 aa). Residues 120-149 are compositionally biased toward basic and acidic residues; sequence LTERERRKQELVSKKAEASRKMEVKAPAKE. Ser167 carries the post-translational modification Phosphoserine. The segment covering 174-188 has biased composition (basic residues); the sequence is RKTKKNKNKKKKKRN.

It belongs to the MPP6 family. As to quaternary structure, associates with the RNA exosome complex.

The protein resides in the nucleus. Its function is as follows. RNA-binding protein that associates with the RNA exosome complex. The protein is M-phase phosphoprotein 6 homolog of Schizosaccharomyces pombe (strain 972 / ATCC 24843) (Fission yeast).